The chain runs to 407 residues: Protein ZNF365 (407 aa).

The residue at position 16 (Ser-16) is a Phosphoserine. The C2H2-type; degenerate zinc-finger motif lies at 26–51 (FRCPRCGDHTRFRSLSSLRAHLEFSH). At Ser-138 the chain carries Phosphoserine. The stretch at 169 to 296 (VEAVDRTIEK…KQLEYYQSQQ (128 aa)) forms a coiled coil. A Phosphothreonine modification is found at Thr-175. The interval 347-392 (LKKAKDDRASMQPAKAIHEQAESSRDLCRPPKKGELLGFGRKGNIR) is disordered. Residues 362-381 (AIHEQAESSRDLCRPPKKGE) are compositionally biased toward basic and acidic residues. Ser-369 bears the Phosphoserine mark.

Homodimers. Interacts with NDE1 and NDEL1. Interacts with DISC1. Interacts with PARP1. Interacts with MCRS1.

It is found in the cytoplasm. Its subcellular location is the cytoskeleton. It localises to the microtubule organizing center. The protein localises to the centrosome. Functionally, involved in the regulation of neurogenesis. Negatively regulates neurite outgrowth. Involved in the morphogenesis of basket cells in the somatosensory cortex during embryogenesis. Involved in the positive regulation of oligodendrocyte differentiation during postnatal growth. Involved in dendritic arborization, morphogenesis of spine density dendrite, and establishment of postsynaptic dendrite density in cortical pyramidal neurons. Involved in homologous recombination (HR) repair pathway. Required for proper resolution of DNA double-strand breaks (DSBs) by HR. Is required for recovery of stalled replication forks, and directly contributes to genomic stability. Interacts with PARP1 and mediates MRE11-dependent DNA end resection during replication fork recovery. Contributes to genomic stability by preventing telomere dysfunction. The protein is Protein ZNF365 (ZNF365) of Pongo abelii (Sumatran orangutan).